The following is a 436-amino-acid chain: 3-ketoacyl-CoA thiolase (436 aa).

Cysteine 99 acts as the Acyl-thioester intermediate in catalysis. Catalysis depends on proton acceptor residues histidine 392 and cysteine 422.

The protein belongs to the thiolase-like superfamily. Thiolase family. In terms of assembly, heterotetramer of two alpha chains (FadJ) and two beta chains (FadI).

It is found in the cytoplasm. The catalysed reaction is an acyl-CoA + acetyl-CoA = a 3-oxoacyl-CoA + CoA. It participates in lipid metabolism; fatty acid beta-oxidation. Functionally, catalyzes the final step of fatty acid oxidation in which acetyl-CoA is released and the CoA ester of a fatty acid two carbons shorter is formed. This chain is 3-ketoacyl-CoA thiolase, found in Escherichia coli (strain ATCC 8739 / DSM 1576 / NBRC 3972 / NCIMB 8545 / WDCM 00012 / Crooks).